The following is a 136-amino-acid chain: Histone H3 (136 aa).

Positions 1 to 43 are disordered; sequence MARTKQTARKSTGGKAPRKQLATKAARKSAPASGGVKKPHRYR. 2 positions are modified to N6,N6,N6-trimethyllysine; alternate: Lys-5 and Lys-10. Lys-5 and Lys-10 each carry N6,N6-dimethyllysine; alternate. Lys-5 and Lys-10 each carry N6-acetyllysine; alternate. The residue at position 5 (Lys-5) is an N6-methyllysine; alternate. Ser-11 bears the Phosphoserine mark. Residues Lys-15 and Lys-24 each carry the N6-acetyllysine modification. Position 28 is an N6,N6,N6-trimethyllysine; alternate (Lys-28). Lys-28 bears the N6,N6-dimethyllysine; alternate mark. The residue at position 28 (Lys-28) is an N6-methyllysine; alternate. Ser-29 is modified (phosphoserine). At Lys-37 the chain carries N6,N6,N6-trimethyllysine; alternate. An N6,N6-dimethyllysine; alternate modification is found at Lys-37. An N6-methyllysine; alternate modification is found at Lys-37. Residue Lys-80 is modified to N6-methyllysine.

The protein belongs to the histone H3 family. As to quaternary structure, the nucleosome is a histone octamer containing two molecules each of H2A, H2B, H3 and H4 assembled in one H3-H4 heterotetramer and two H2A-H2B heterodimers. The octamer wraps approximately 147 bp of DNA. Interacts (via N-terminal tail mono-acetylated on Lys-15) with swsn-4 (via Bromo domain); the interaction is direct. Phosphorylated at Ser-11 and Ser-29 during M phase. Phosphorylation of Ser-11 requires air-2 but not air-1. Dephosphorylated by gsp-1 and/or gsp-2 during chromosome segregation. Post-translationally, acetylation is generally linked to gene activation. In terms of processing, methylation at Lys-5 is linked to gene activation and is absent from male inactive X chromosome chromatin. Methylation at Lys-10 is linked to gene repression and is enriched in male inactive X chromosome chromatin. Methylation at Lys-37 occurs on the entire length of autosomes during meiotic prophase. Trimethylation at Lys-10 and Lys-37 is specifically antagonized by jmjd-2. Dimethylation and trimethylation at Lys-28 occurs in all nuclei. The mes-2-mes-3-mes-6 complex may be responsible for Lys-28 methylation in most of the germline and in the early embryo.

The protein localises to the nucleus. The protein resides in the chromosome. In terms of biological role, core component of nucleosome. Nucleosomes wrap and compact DNA into chromatin, limiting DNA accessibility to the cellular machineries which require DNA as a template. Histones thereby play a central role in transcription regulation, DNA repair, DNA replication and chromosomal stability. DNA accessibility is regulated via a complex set of post-translational modifications of histones, also called histone code, and nucleosome remodeling. The sequence is that of Histone H3 (his-2) from Caenorhabditis elegans.